The following is a 147-amino-acid chain: Transcriptional regulator MraZ (147 aa).

2 consecutive SpoVT-AbrB domains span residues 5–52 (SHAI…PETE) and 81–124 (ATTL…SEEA).

This sequence belongs to the MraZ family. In terms of assembly, forms oligomers.

It localises to the cytoplasm. The protein resides in the nucleoid. The protein is Transcriptional regulator MraZ of Saccharophagus degradans (strain 2-40 / ATCC 43961 / DSM 17024).